We begin with the raw amino-acid sequence, 463 residues long: L-seryl-tRNA(Sec) selenium transferase (463 aa).

Lys295 bears the N6-(pyridoxal phosphate)lysine mark.

This sequence belongs to the SelA family. In terms of assembly, homodecamer; pentamer of dimers. Binds only one seryl-tRNA(Sec) per dimer. It depends on pyridoxal 5'-phosphate as a cofactor.

Its subcellular location is the cytoplasm. The catalysed reaction is L-seryl-tRNA(Sec) + selenophosphate + H(+) = L-selenocysteinyl-tRNA(Sec) + phosphate. Its pathway is aminoacyl-tRNA biosynthesis; selenocysteinyl-tRNA(Sec) biosynthesis; selenocysteinyl-tRNA(Sec) from L-seryl-tRNA(Sec) (bacterial route): step 1/1. In terms of biological role, converts seryl-tRNA(Sec) to selenocysteinyl-tRNA(Sec) required for selenoprotein biosynthesis. This Shigella dysenteriae serotype 1 (strain Sd197) protein is L-seryl-tRNA(Sec) selenium transferase.